The sequence spans 647 residues: 1-deoxy-D-xylulose-5-phosphate synthase (647 aa).

Residues histidine 88 and 129 to 131 each bind thiamine diphosphate; that span reads GHA. Aspartate 160 contacts Mg(2+). Residues 161 to 162, asparagine 189, tyrosine 300, and glutamate 377 each bind thiamine diphosphate; that span reads GA. Asparagine 189 provides a ligand contact to Mg(2+).

Belongs to the transketolase family. DXPS subfamily. Homodimer. It depends on Mg(2+) as a cofactor. Requires thiamine diphosphate as cofactor.

The enzyme catalyses D-glyceraldehyde 3-phosphate + pyruvate + H(+) = 1-deoxy-D-xylulose 5-phosphate + CO2. The protein operates within metabolic intermediate biosynthesis; 1-deoxy-D-xylulose 5-phosphate biosynthesis; 1-deoxy-D-xylulose 5-phosphate from D-glyceraldehyde 3-phosphate and pyruvate: step 1/1. In terms of biological role, catalyzes the acyloin condensation reaction between C atoms 2 and 3 of pyruvate and glyceraldehyde 3-phosphate to yield 1-deoxy-D-xylulose-5-phosphate (DXP). This chain is 1-deoxy-D-xylulose-5-phosphate synthase, found in Dehalococcoides mccartyi (strain ATCC BAA-2266 / KCTC 15142 / 195) (Dehalococcoides ethenogenes (strain 195)).